Consider the following 237-residue polypeptide: Ribosomal RNA small subunit methyltransferase G (237 aa).

S-adenosyl-L-methionine is bound by residues G78, F83, A129–E130, and R148.

It belongs to the methyltransferase superfamily. RNA methyltransferase RsmG family.

The protein resides in the cytoplasm. Specifically methylates the N7 position of a guanine in 16S rRNA. In Streptococcus pyogenes serotype M3 (strain ATCC BAA-595 / MGAS315), this protein is Ribosomal RNA small subunit methyltransferase G.